The primary structure comprises 442 residues: tRNA-2-methylthio-N(6)-dimethylallyladenosine synthase (442 aa).

Positions 6–122 (RKFYIHTFGC…LPALIAEAGD (117 aa)) constitute an MTTase N-terminal domain. [4Fe-4S] cluster contacts are provided by Cys-15, Cys-51, Cys-85, Cys-157, Cys-161, and Cys-164. The 231-residue stretch at 143–373 (RTQSLNAFVP…IDLQNGISAE (231 aa)) folds into the Radical SAM core domain. The 64-residue stretch at 376 to 439 (GLAPGSVVEV…SATLFGQSAE (64 aa)) folds into the TRAM domain.

It belongs to the methylthiotransferase family. MiaB subfamily. As to quaternary structure, monomer. The cofactor is [4Fe-4S] cluster.

It localises to the cytoplasm. It carries out the reaction N(6)-dimethylallyladenosine(37) in tRNA + (sulfur carrier)-SH + AH2 + 2 S-adenosyl-L-methionine = 2-methylsulfanyl-N(6)-dimethylallyladenosine(37) in tRNA + (sulfur carrier)-H + 5'-deoxyadenosine + L-methionine + A + S-adenosyl-L-homocysteine + 2 H(+). Catalyzes the methylthiolation of N6-(dimethylallyl)adenosine (i(6)A), leading to the formation of 2-methylthio-N6-(dimethylallyl)adenosine (ms(2)i(6)A) at position 37 in tRNAs that read codons beginning with uridine. This Chlorobium phaeobacteroides (strain DSM 266 / SMG 266 / 2430) protein is tRNA-2-methylthio-N(6)-dimethylallyladenosine synthase.